Reading from the N-terminus, the 160-residue chain is Cytochrome b6-f complex subunit 4 (160 aa).

Transmembrane regions (helical) follow at residues L36–V56, L95–E115, and P127–A147.

It belongs to the cytochrome b family. PetD subfamily. As to quaternary structure, the 4 large subunits of the cytochrome b6-f complex are cytochrome b6, subunit IV (17 kDa polypeptide, PetD), cytochrome f and the Rieske protein, while the 4 small subunits are PetG, PetL, PetM and PetN. The complex functions as a dimer.

It is found in the cellular thylakoid membrane. Functionally, component of the cytochrome b6-f complex, which mediates electron transfer between photosystem II (PSII) and photosystem I (PSI), cyclic electron flow around PSI, and state transitions. In Prochlorothrix hollandica, this protein is Cytochrome b6-f complex subunit 4.